Reading from the N-terminus, the 269-residue chain is Phosphatidylglycerophosphate phosphatase 1, chloroplastic (269 aa).

The N-terminal 33 residues, 1-33 (MRSVPGPSPPCTRSLAHSCRAAARGPCGSARPR), are a transit peptide targeting the chloroplast. Residues 25 to 46 (GPCGSARPRARSVSARAHSSEA) form a disordered region. Residues 29–46 (SARPRARSVSARAHSSEA) show a composition bias toward low complexity. The Phosphoryl acceptor motif lies at 103-107 (DKDNT).

Belongs to the HAD-like hydrolase superfamily.

The protein localises to the plastid. It localises to the chloroplast. The catalysed reaction is a 1,2-diacyl-sn-glycero-3-phospho-(1'-sn-glycero-3'-phosphate) + H2O = a 1,2-diacyl-sn-glycero-3-phospho-(1'-sn-glycerol) + phosphate. It functions in the pathway phospholipid metabolism; phosphatidylglycerol biosynthesis; phosphatidylglycerol from CDP-diacylglycerol: step 2/2. Functionally, phosphatidylglycerophosphate phosphatase involved in the biosynthesis of phosphatidylglycerol (PG), a phosphoglycerolipid predominantly present in chloroplastic thylakoid membranes and which has important photosynthetic function. Required for thylakoid membranes development and chloroplast function. In Chlamydomonas reinhardtii (Chlamydomonas smithii), this protein is Phosphatidylglycerophosphate phosphatase 1, chloroplastic.